The chain runs to 71 residues: Serine palmitoyltransferase small subunit A (71 aa).

The Cytoplasmic portion of the chain corresponds to 1 to 12 (MAGMALARAWKQ). Residues 13–29 (MSWFYYQYLLVTALYML) form a helical membrane-spanning segment. At 30–34 (EPWER) the chain is on the lumenal side. Residues 35–57 (TVFNSMLVSVVGMALYTGYVFMP) form a helical membrane-spanning segment. Residues 58–71 (QHIMAILHYFEIVQ) lie on the Cytoplasmic side of the membrane.

Belongs to the SPTSS family. SPTSSA subfamily. Component of the serine palmitoyltransferase (SPT) complex, which is composed of SPTLC1, SPTLC2 or SPTLC3 and SPTSSA or SPTSSB. The heterodimer consisting of SPTLC1 and SPTLC2/SPTLC3 forms the catalytic core of the enzyme, while SPTSSA or SPTSSB subunits determine substrate specificity. SPT also interacts with ORMDL proteins, especially ORMDL3, which negatively regulate SPT activity in the presence of ceramides. Interacts with MBOAT7; the interaction plays a role in MBOAT7 localization to mitochondria-associated membranes.

It localises to the endoplasmic reticulum membrane. Its pathway is lipid metabolism; sphingolipid metabolism. Functionally, component of the serine palmitoyltransferase multisubunit enzyme (SPT) that catalyzes the initial and rate-limiting step in sphingolipid biosynthesis by condensing L-serine and activated acyl-CoA (most commonly palmitoyl-CoA) to form long-chain bases. The SPT complex is composed of SPTLC1, SPTLC2 or SPTLC3 and SPTSSA or SPTSSB. Within this complex, the heterodimer consisting of SPTLC1 and SPTLC2/SPTLC3 forms the catalytic core. Within the SPT complex, SPTSSA stimulates the catalytic activity and plays a role in substrate specificity, which depends upon the overall complex composition. The SPTLC1-SPTLC2-SPTSSA complex shows a strong preference for C16-CoA substrate, while the SPTLC1-SPTLC3-SPTSSA isozyme uses both C14-CoA and C16-CoA as substrates, with a slight preference for C14-CoA. Independently of its action as a SPT component, may be involved in MBOAT7 localization to mitochondria-associated membranes, a membrane bridge between the endoplasmic reticulum and mitochondria, may hence affect MBOAT7-catalyzed incorporation of arachidonic acid into phosphatidylinositol. This is Serine palmitoyltransferase small subunit A from Mus musculus (Mouse).